We begin with the raw amino-acid sequence, 290 residues long: Mitochondrial dicarboxylate carrier (290 aa).

Solcar repeat units lie at residues 6-90, 101-188, and 197-281; these read TKRL…VKKQ, QKAL…IKQT, and DNLQ…LRLK. Transmembrane regions (helical) follow at residues 12–32, 65–84, and 103–123; these read WYFG…LDLL, GVSA…FGIY, and ALLA…GDLV. The residue at position 159 (Lys-159) is an N6-acetyllysine. A run of 3 helical transmembrane segments spans residues 163–182, 203–223, and 256–276; these read GATM…LSFY, FASS…LDVM, and GFIP…IFFE.

This sequence belongs to the mitochondrial carrier (TC 2.A.29) family.

It is found in the mitochondrion inner membrane. It carries out the reaction (S)-malate(in) + phosphate(out) = (S)-malate(out) + phosphate(in). It catalyses the reaction malonate(out) + (S)-malate(in) = malonate(in) + (S)-malate(out). The enzyme catalyses (S)-malate(in) + succinate(out) = (S)-malate(out) + succinate(in). The catalysed reaction is (S)-malate(in) + sulfate(out) = (S)-malate(out) + sulfate(in). It carries out the reaction 2 thiosulfate(out) + (S)-malate(in) = 2 thiosulfate(in) + (S)-malate(out). It catalyses the reaction malonate(out) + phosphate(in) = malonate(in) + phosphate(out). The enzyme catalyses succinate(out) + phosphate(in) = succinate(in) + phosphate(out). The catalysed reaction is sulfate(out) + phosphate(in) = sulfate(in) + phosphate(out). It carries out the reaction 2 thiosulfate(out) + phosphate(in) = 2 thiosulfate(in) + phosphate(out). It catalyses the reaction malonate(out) + succinate(in) = malonate(in) + succinate(out). In terms of biological role, catalyzes the electroneutral exchange or flux of physiologically important metabolites such as dicarboxylates (malonate, malate, succinate), inorganic sulfur-containing anions, and phosphate, across mitochondrial inner membrane. Plays an important role in gluconeogenesis, fatty acid metabolism, urea synthesis, and sulfur metabolism, by supplying the substrates for the different metabolic processes. The sequence is that of Mitochondrial dicarboxylate carrier from Caenorhabditis elegans.